The chain runs to 187 residues: Phosphoribosyl-AMP cyclohydrolase (187 aa).

This sequence belongs to the PRA-CH family. As to quaternary structure, homodimer.

Its subcellular location is the cytoplasm. It catalyses the reaction 1-(5-phospho-beta-D-ribosyl)-5'-AMP + H2O = 1-(5-phospho-beta-D-ribosyl)-5-[(5-phospho-beta-D-ribosylamino)methylideneamino]imidazole-4-carboxamide. Its pathway is amino-acid biosynthesis; L-histidine biosynthesis; L-histidine from 5-phospho-alpha-D-ribose 1-diphosphate: step 3/9. In terms of biological role, catalyzes the hydrolysis of the adenine ring of phosphoribosyl-AMP. The polypeptide is Phosphoribosyl-AMP cyclohydrolase (hisI) (Leptospira interrogans serogroup Icterohaemorrhagiae serovar Lai (strain 56601)).